Reading from the N-terminus, the 52-residue chain is Large ribosomal subunit protein eL39 (52 aa).

Belongs to the eukaryotic ribosomal protein eL39 family.

The sequence is that of Large ribosomal subunit protein eL39 from Caldivirga maquilingensis (strain ATCC 700844 / DSM 13496 / JCM 10307 / IC-167).